Here is a 371-residue protein sequence, read N- to C-terminus: Queuine tRNA-ribosyltransferase (371 aa).

Residue Asp90 is the Proton acceptor of the active site. Residues 90–94 (DSGGF), Asp144, Gln189, and Gly215 contribute to the substrate site. Residues 246–252 (GVGTPEN) are RNA binding. The Nucleophile role is filled by Asp265. The RNA binding; important for wobble base 34 recognition stretch occupies residues 270–274 (TRNAR). 4 residues coordinate Zn(2+): Cys303, Cys305, Cys308, and His334.

The protein belongs to the queuine tRNA-ribosyltransferase family. As to quaternary structure, homodimer. Within each dimer, one monomer is responsible for RNA recognition and catalysis, while the other monomer binds to the replacement base PreQ1. The cofactor is Zn(2+).

It carries out the reaction 7-aminomethyl-7-carbaguanine + guanosine(34) in tRNA = 7-aminomethyl-7-carbaguanosine(34) in tRNA + guanine. It functions in the pathway tRNA modification; tRNA-queuosine biosynthesis. In terms of biological role, catalyzes the base-exchange of a guanine (G) residue with the queuine precursor 7-aminomethyl-7-deazaguanine (PreQ1) at position 34 (anticodon wobble position) in tRNAs with GU(N) anticodons (tRNA-Asp, -Asn, -His and -Tyr). Catalysis occurs through a double-displacement mechanism. The nucleophile active site attacks the C1' of nucleotide 34 to detach the guanine base from the RNA, forming a covalent enzyme-RNA intermediate. The proton acceptor active site deprotonates the incoming PreQ1, allowing a nucleophilic attack on the C1' of the ribose to form the product. After dissociation, two additional enzymatic reactions on the tRNA convert PreQ1 to queuine (Q), resulting in the hypermodified nucleoside queuosine (7-(((4,5-cis-dihydroxy-2-cyclopenten-1-yl)amino)methyl)-7-deazaguanosine). The polypeptide is Queuine tRNA-ribosyltransferase (Helicobacter pylori (strain HPAG1)).